The sequence spans 261 residues: Pimeloyl-[acyl-carrier protein] methyl ester esterase (261 aa).

An AB hydrolase-1 domain is found at 16–241 (LVLLHGWGLN…HAAHAPFISH (226 aa)). Substrate-binding positions include W22, 82–83 (SL), and 143–147 (FLALQ). S82 serves as the catalytic Nucleophile. Catalysis depends on residues D207 and H235. H235 serves as a coordination point for substrate.

This sequence belongs to the AB hydrolase superfamily. Carboxylesterase BioH family. As to quaternary structure, monomer.

It is found in the cytoplasm. It catalyses the reaction 6-carboxyhexanoyl-[ACP] methyl ester + H2O = 6-carboxyhexanoyl-[ACP] + methanol + H(+). The protein operates within cofactor biosynthesis; biotin biosynthesis. In terms of biological role, the physiological role of BioH is to remove the methyl group introduced by BioC when the pimeloyl moiety is complete. It allows to synthesize pimeloyl-ACP via the fatty acid synthetic pathway through the hydrolysis of the ester bonds of pimeloyl-ACP esters. The protein is Pimeloyl-[acyl-carrier protein] methyl ester esterase of Photorhabdus laumondii subsp. laumondii (strain DSM 15139 / CIP 105565 / TT01) (Photorhabdus luminescens subsp. laumondii).